We begin with the raw amino-acid sequence, 131 residues long: Profilin-5 (131 aa).

Residues C13 and C115 are joined by a disulfide bond. The Involved in PIP2 interaction signature appears at 81 to 97; it reads VVIRGKKGTGGITIKKT. Phosphothreonine is present on T111.

It belongs to the profilin family. Multimer. Occurs in many kinds of cells as a complex with monomeric actin in a 1:1 ratio. Post-translationally, phosphorylated by MAP kinases. As to expression, expressed in vegetative tissues. Present in shoots, roots and coleoptiles. Also detected in endosperm and pollen.

It is found in the cytoplasm. The protein localises to the cytoskeleton. Actin binding is enhanced by calcium Ca(2+). Functionally, binds to actin and affects the structure of the cytoskeleton. At high concentrations, profilin prevents the polymerization of actin, whereas it enhances it at low concentrations. By binding to PIP2, it inhibits the formation of IP3 and DG. Has a high affinity for poly-proline. This Zea mays (Maize) protein is Profilin-5.